We begin with the raw amino-acid sequence, 61 residues long: Large ribosomal subunit protein bL32 (61 aa).

The tract at residues 1–22 is disordered; the sequence is MAVPKQKSSKSRGRKRRTHQKV. A compositionally biased stretch (basic residues) spans 7–20; sequence KSSKSRGRKRRTHQ.

Belongs to the bacterial ribosomal protein bL32 family.

The protein is Large ribosomal subunit protein bL32 of Desulforapulum autotrophicum (strain ATCC 43914 / DSM 3382 / VKM B-1955 / HRM2) (Desulfobacterium autotrophicum).